A 478-amino-acid chain; its full sequence is MDHSLGWQGNSVPEDGTEAGIKHFLEDSSDDAELSKFVKDFPGSEPYHSAESKTRVARPQILEPRPQSPDLCDDDVEFRGSLWPQPSDSQQYFSAPAPLSPSSRPRSPWGKLDPYDSSEDDKEYVGFATLPNQVHRKSVKKGFDFTLMVAGESGLGKSTLVNSLFLTDLYRDRKLLGAEERIMQTVEITKHAVDIEEKGVRLRLTIVDTPGFGDAVNNTECWKPVAEYIDQQFEQYFRDESGLNRKNIQDNRVHCCLYFISPFGHGLRPLDVEFMKALHQRVNIVPILAKADTLTPPEVDRKKCKIREEIEHFGIKIYQFPDCDSDEDEDFKLQDQALKESIPFAVIGSNTVVEARGRRVRGRLYPWGIVEVENPGHCDFVKLRTMLVRTHMQDLKDVTRETHYENYRAQCIQSMTRLVVKERNRNKLTRESGTDFPIPAVPPGTDPETEKLIREKDEELRRMQEMLHKIQRQMKETH.

Residues 1–115 (MDHSLGWQGN…RSPWGKLDPY (115 aa)) form a disordered region. Phosphoserine is present on residues serine 28, serine 29, and serine 68. The span at 84 to 93 (PQPSDSQQYF) shows a compositional bias: polar residues. Residues 94–108 (SAPAPLSPSSRPRSP) show a composition bias toward low complexity. Residues serine 117 and serine 118 each carry the phosphoserine modification. The region spanning 141 to 414 (KGFDFTLMVA…ENYRAQCIQS (274 aa)) is the Septin-type G domain. A G1 motif region spans residues 151–158 (GESGLGKS). GTP-binding positions include 151-158 (GESGLGKS) and threonine 185. The tract at residues 208 to 211 (DTPG) is G3 motif. Residues 289 to 292 (AKAD) form a G4 motif region. A GTP-binding site is contributed by 290-298 (KADTLTPPE). Serine 325 is subject to Phosphoserine. GTP is bound by residues glycine 348 and arginine 363. The interval 428–449 (LTRESGTDFPIPAVPPGTDPET) is disordered. The residue at position 432 (serine 432) is a Phosphoserine. A Phosphothreonine modification is found at threonine 434. Positions 447–478 (PETEKLIREKDEELRRMQEMLHKIQRQMKETH) form a coiled coil.

This sequence belongs to the TRAFAC class TrmE-Era-EngA-EngB-Septin-like GTPase superfamily. Septin GTPase family. As to quaternary structure, septins polymerize into heterooligomeric protein complexes that form filaments, and can associate with cellular membranes, actin filaments and microtubules. GTPase activity is required for filament formation. Interacts with SEPTIN8. Component of a septin core octameric complex consisting of SEPTIN12, SEPTIN7, SEPTIN6 and SEPTIN2 or SEPTIN4 in the order 12-7-6-2-2-6-7-12 or 12-7-6-4-4-6-7-12. Interacts with SEPTIN14 (via C-terminus). Interacts with DYRK1A. Interacts with SLC6A3/DAT and SNCA/alpha-synuclein. Interacts with STX1A; in the striatum. Interacts with XIAP (via BIR3 domain) following the induction of apoptosis. Interacts with AREL1 (via HECT domain); in the cytoplasm following induction of apoptosis. Interacts with DPYSL5. Post-translationally, phosphorylated by DYRK1A. Ubiquitinated by AREL1. In terms of processing, may be phosphorylated. In terms of tissue distribution, expressed in the cerebral cortex, striatum, midbrain, cerebellum and spinal cord (at protein level). Expressed in the substantia nigra pars compacta, ventral tegmental area, projection fiber bundles and in axon terminals surrounding striatal neurons (at protein level). Expressed in hair follicle stem cells (at protein level). Expressed in small intestinal crypts; abundantly expressed at the crypt base (at protein level). Widely expressed in the brain and to a lesser extent in the testis, lung and liver. Highly expressed in the brain and testis and, to a lesser extent in the heart, lung and kidney. In the brain, abundant in areas of high cell density, particularly in the stria terminalis. Expressed in the entorhinal, temporal and visual cortices and the hippocampus of the brain where is colocalizes with DYRK1A in postnatal day 1 and adult mice. Expressed and extensively colocalizes with DYRK1A in apical dendrites of pyramidal cells. As to expression, predominantly expressed in embryonic brain and dorsal root ganglion neurons. In terms of tissue distribution, expressed in LGR5-positive intestinal stem cells and lysozyme-positive Paneth cells (at protein level). Expressed in the brain and testis.

The protein localises to the cytoplasm. It is found in the cell projection. Its subcellular location is the cilium. The protein resides in the flagellum. It localises to the cytoplasmic vesicle. The protein localises to the secretory vesicle. It is found in the axon. Its subcellular location is the dendrite. The protein resides in the perikaryon. It localises to the synapse. The protein localises to the mitochondrion. It is found in the cytosol. Functionally, filament-forming cytoskeletal GTPase. Pro-apoptotic protein involved in LGR5-positive intestinal stem cell and Paneth cell expansion in the intestines, via its interaction with XIAP. May also play a role in the regulation of cell fate in the intestine. Positive regulator of apoptosis involved in hematopoietic stem cell homeostasis; via its interaction with XIAP. Negative regulator of repair and hair follicle regeneration in response to injury, due to inhibition of hair follicle stem cell proliferation, potentially via its interaction with XIAP. Plays an important role in male fertility and sperm motility. During spermiogenesis, essential for the establishment of the annulus (a fibrous ring structure connecting the midpiece and the principal piece of the sperm flagellum) which is a requisite for the structural and mechanical integrity of the sperm. Involved in the migration of cortical neurons and the formation of neuron leading processes during embryonic development. Required for dopaminergic metabolism in presynaptic autoreceptors; potentially via activity as a presynaptic scaffold protein. This Mus musculus (Mouse) protein is Septin-4.